A 177-amino-acid polypeptide reads, in one-letter code: GTP-dependent dephospho-CoA kinase (177 aa).

GTP is bound by residues aspartate 45, valine 46, valine 47, aspartate 64, and glutamate 120.

Belongs to the GTP-dependent DPCK family.

It carries out the reaction 3'-dephospho-CoA + GTP = GDP + CoA + H(+). It participates in cofactor biosynthesis; coenzyme A biosynthesis. Functionally, catalyzes the GTP-dependent phosphorylation of the 3'-hydroxyl group of dephosphocoenzyme A to form coenzyme A (CoA). This is GTP-dependent dephospho-CoA kinase from Halobacterium salinarum (strain ATCC 29341 / DSM 671 / R1).